The following is a 360-amino-acid chain: POU domain, class 5, transcription factor 1 (360 aa).

Disordered stretches follow at residues 1–52 (MAGH…PGVG) and 88–114 (GGLETSQPEGEAGVGVESNSDGASPEP). The short motif at 4 to 12 (HLASDFAFS) is the 9aaTAD element. Ser111 carries the phosphoserine; by MAPK modification. A Glycyl lysine isopeptide (Lys-Gly) (interchain with G-Cter in SUMO) cross-link involves residue Lys123. The POU-specific domain maps to 138-212 (DIKALQKELE…LLQKWVEEAD (75 aa)). The DNA site is built by Arg157 and Gln164. 2 DNA-binding regions span residues 180–186 (SQTTICR) and 193–196 (SFKN). The segment at residues 230-289 (RKRKRTSIENRVRGNLENLFLQCPKPTLQQISHIAQQLGLEKDVVRVWFCNRRQKGKRSS) is a DNA-binding region (homeobox). Thr235 is subject to Phosphothreonine. Ser236, Ser289, Ser290, and Ser355 each carry phosphoserine.

Belongs to the POU transcription factor family. Class-5 subfamily. Interacts with PKM. Interacts with WWP2. Interacts with UBE2I and ZSCAN10. Interacts with PCGF1. Interacts with ESRRB; recruits ESRRB near the POU5F1-SOX2 element in the NANOG proximal promoter; the interaction is DNA independent. Interacts with ZNF322. Interacts with MAPK8 and MAPK9; the interaction allows MAPK8 and MAPK9 to phosphorylate POU5F1 on Ser-355. Interacts (when phosphorylated on Ser-355) with FBXW8. Interacts with FBXW4. Interacts with SOX2 and SOX15; binds synergistically with either SOX2 or SOX15 to DNA. Interacts with DDX56. Post-translationally, sumoylation enhances the protein stability, DNA binding and transactivation activity. Sumoylation is required for enhanced YES1 expression. In terms of processing, ubiquitinated; undergoes 'Lys-63'-linked polyubiquitination by WWP2 leading to proteasomal degradation. ERK1/2-mediated phosphorylation at Ser-111 promotes nuclear exclusion and proteasomal degradation. Phosphorylation at Thr-235 and Ser-236 decrease DNA-binding and alters ability to activate transcription. In terms of tissue distribution, expressed in developing brain. Highest levels found in specific cell layers of the cortex, the olfactory bulb, the hippocampus and the cerebellum. Low levels of expression in adult tissues.

The protein resides in the cytoplasm. It localises to the nucleus. Transcription factor that binds to the octamer motif (5'-ATTTGCAT-3'). Forms a trimeric complex with SOX2 or SOX15 on DNA and controls the expression of a number of genes involved in embryonic development such as YES1, FGF4, UTF1 and ZFP206. Critical for early embryogenesis and for embryonic stem cell pluripotency. This Homo sapiens (Human) protein is POU domain, class 5, transcription factor 1 (POU5F1).